The primary structure comprises 141 residues: Hemoglobin subunit alpha-D (141 aa).

Residues Met-1–Arg-141 enclose the Globin domain. Residues His-58 and His-87 each contribute to the heme b site.

The protein belongs to the globin family. Heterotetramer of two alpha-D chains and two beta chains. As to expression, red blood cells.

In terms of biological role, involved in oxygen transport from the lung to the various peripheral tissues. The protein is Hemoglobin subunit alpha-D (HBAD) of Branta canadensis (Canada goose).